A 512-amino-acid polypeptide reads, in one-letter code: MGIKRETILILDFGGQYTQLIARRIREANVYCEIVPYDISPEEIKKIDPKGIVLSGGPASVYVKNAPKCDKEIFELGYPVLGICYGVQLMTELLGGKVAPAPVREYGKTEVVINNTIPLFKGIERDTIVWMSHTDQIELPPPDFKVVASTENCPIAAIANVEKKLYGVQFHPEVSHTHRGTEIIRNFLFEVCDCSADWTMDSLIEQTVKEVRAKVGNHKAVCALSGGVDSAVAAVLVDRAIHDQLVCIFVDTGLLRTNEGDMVIETFRKNYDMNIIRVDAKDRFLSRLKGVTDPEEKRKIIGNVFIEVFKEEAMKIGDVKFLVQGTLYPDVIESGHGISSTIKSHHNVGGLPEDIGFELIEPLRMLFKDEVRQVGKELGIPDEILYRQPFPGPGLAVRIVGEVTEEKLEILRLADSIVQREMKRFGWYNKVWQSFAILPGIKSVGVMGDERTYGYAIILRVVDSMDGMTADWTKLPYEILESISTSITNEVPGVNRVLYDITSKPPATIEWE.

A Glutamine amidotransferase type-1 domain is found at 7 to 197 (TILILDFGGQ…LFEVCDCSAD (191 aa)). Catalysis depends on cysteine 84, which acts as the Nucleophile. Active-site residues include histidine 171 and glutamate 173. One can recognise a GMPS ATP-PPase domain in the interval 198–387 (WTMDSLIEQT…LGIPDEILYR (190 aa)). 225-231 (SGGVDSA) contacts ATP.

In terms of assembly, homodimer.

The catalysed reaction is XMP + L-glutamine + ATP + H2O = GMP + L-glutamate + AMP + diphosphate + 2 H(+). Its pathway is purine metabolism; GMP biosynthesis; GMP from XMP (L-Gln route): step 1/1. Catalyzes the synthesis of GMP from XMP. This is GMP synthase [glutamine-hydrolyzing] from Caldanaerobacter subterraneus subsp. tengcongensis (strain DSM 15242 / JCM 11007 / NBRC 100824 / MB4) (Thermoanaerobacter tengcongensis).